The following is a 490-amino-acid chain: MKKSLLAVMLTGLFALVSLPALGNVNLEQLKQKAESGEAKAQLELGYRYFQGNETTKDLTQAMDWFRRAAEQGYTPAEYVLGLRYMNGEGVPQDYAQAVIWYKKAALKGLPQAQQNLGVMYHEGNGVKVDKAESVKWFRLAAEQGRDSGQQSMGDAYFEGDGVTRDYVMAREWYSKAAEQGNVWSCNQLGYMYSRGLGVERNDAISAQWYRKSATSGDELGQLHLADMYYFGIGVTQDYTQSRVLFSQSAEQGNSIAQFRLGYILEQGLAGAKEPLKALEWYRKSAEQGNSDGQYYLAHLYDKGAEGVAKNREQAISWYTKSAEQGDATAQANLGAIYFRLGSEEEHKKAVEWFRKAAAKGEKAAQFNLGNALLQGKGVKKDEQQAAIWMRKAAEQGLSAAQVQLGEIYYYGLGVERDYVQAWAWFDTASTNDMNLFGTENRNITEKKLTAKQLQQAELLSQQYIEKYAPEAWARMQKLKAQSAVKTGNK.

Residues 1 to 23 (MKKSLLAVMLTGLFALVSLPALG) form the signal peptide. 11 Sel1-like repeats span residues 39–74 (AKAQLELGYRYFQGNETTKDLTQAMDWFRRAAEQGY), 77–109 (AEYVLGLRYMNGEGVPQDYAQAVIWYKKAALKG), 111–145 (PQAQQNLGVMYHEGNGVKVDKAESVKWFRLAAEQG), 153–182 (MGDAYFEGDGVTRDYVMAREWYSKAAEQGN), 185–218 (SCNQLGYMYSRGLGVERNDAISAQWYRKSATSGD), 222–254 (QLHLADMYYFGIGVTQDYTQSRVLFSQSAEQGN), 256–290 (IAQFRLGYILEQGLAGAKEPLKALEWYRKSAEQGN), 291–327 (SDGQYYLAHLYDKGAEGVAKNREQAISWYTKSAEQGD), 328–361 (ATAQANLGAIYFRLGSEEEHKKAVEWFRKAAAKG), 364–397 (AAQFNLGNALLQGKGVKKDEQQAAIWMRKAAEQG), and 399–430 (SAAQVQLGEIYYYGLGVERDYVQAWAWFDTAS). Mg(2+) contacts are provided by His122, Glu159, and Asp161.

As to quaternary structure, interacts with human secreted IgA (SIgA) at least via resides 244-260. It depends on Mg(2+) as a cofactor.

The protein localises to the cell surface. Functionally, upon host (human neutrophil) infection interferes with productive FCAR signaling, inhibiting secreted IgA (SIgA) effector functions and probably avoiding neutrophil activation. Inhibits the SIgA-mediated oxidative burst by neutrophils, decreases generation of ROS (reactive oxygen species) by neutrophils and reduces chemotaxis by neutrophils, all of which are SIgA effector functions used to stimulate the immune response. Does not block SIgA-binding to its receptor (FCAR) on neutrophils, but it decreases SIgA-stimulated phosphorylation of cytoplasmic proteins, including phospholipase C-gamma and MAP kinases, all actions that may be advantageous to the pathogen. This is Secretory immunoglobulin A-binding protein EsiB from Escherichia coli O6:H1 (strain CFT073 / ATCC 700928 / UPEC).